The primary structure comprises 522 residues: Light-independent protochlorophyllide reductase subunit B (522 aa).

Aspartate 36 is a binding site for [4Fe-4S] cluster. Aspartate 290 functions as the Proton donor in the catalytic mechanism. Residue 425-426 (GL) coordinates substrate.

This sequence belongs to the ChlB/BchB/BchZ family. In terms of assembly, protochlorophyllide reductase is composed of three subunits; ChlL, ChlN and ChlB. Forms a heterotetramer of two ChlB and two ChlN subunits. [4Fe-4S] cluster is required as a cofactor.

The enzyme catalyses chlorophyllide a + oxidized 2[4Fe-4S]-[ferredoxin] + 2 ADP + 2 phosphate = protochlorophyllide a + reduced 2[4Fe-4S]-[ferredoxin] + 2 ATP + 2 H2O. Its pathway is porphyrin-containing compound metabolism; chlorophyll biosynthesis (light-independent). Component of the dark-operative protochlorophyllide reductase (DPOR) that uses Mg-ATP and reduced ferredoxin to reduce ring D of protochlorophyllide (Pchlide) to form chlorophyllide a (Chlide). This reaction is light-independent. The NB-protein (ChlN-ChlB) is the catalytic component of the complex. The chain is Light-independent protochlorophyllide reductase subunit B from Synechococcus sp. (strain CC9311).